We begin with the raw amino-acid sequence, 500 residues long: Putative beta-lactamase-like 1 (500 aa).

Belongs to the beta-lactamase family.

The protein is Putative beta-lactamase-like 1 (LACTBL1) of Homo sapiens (Human).